A 392-amino-acid polypeptide reads, in one-letter code: Phospho-N-acetylmuramoyl-pentapeptide-transferase (392 aa).

Helical transmembrane passes span 29-49 (AVMAALTALLIGLLAGPFVIR), 76-96 (TMGGVLILMSIGISTLLWFDL), 100-120 (FVWIVLLVTLGFGAIGWADDW), 137-157 (YLWQSLIGLVAALYLVFSISE), 193-213 (ISYPLGVFGFVILTYLVIVGS), 225-245 (GLAIMPVVMVGSALGVFAYVT), 262-282 (SGELLIFCSAMAGAGLAFLWF), 289-309 (VFMGDVGALALGAALGTIAVI), 314-334 (IVLAIMGGIFVVEALSVMMQV), and 369-389 (QVVVRFWIITMLLCLVGLSTL).

Belongs to the glycosyltransferase 4 family. MraY subfamily. Mg(2+) is required as a cofactor.

The protein localises to the cell inner membrane. It catalyses the reaction UDP-N-acetyl-alpha-D-muramoyl-L-alanyl-gamma-D-glutamyl-meso-2,6-diaminopimeloyl-D-alanyl-D-alanine + di-trans,octa-cis-undecaprenyl phosphate = di-trans,octa-cis-undecaprenyl diphospho-N-acetyl-alpha-D-muramoyl-L-alanyl-D-glutamyl-meso-2,6-diaminopimeloyl-D-alanyl-D-alanine + UMP. It participates in cell wall biogenesis; peptidoglycan biosynthesis. Functionally, catalyzes the initial step of the lipid cycle reactions in the biosynthesis of the cell wall peptidoglycan: transfers peptidoglycan precursor phospho-MurNAc-pentapeptide from UDP-MurNAc-pentapeptide onto the lipid carrier undecaprenyl phosphate, yielding undecaprenyl-pyrophosphoryl-MurNAc-pentapeptide, known as lipid I. This Polaromonas sp. (strain JS666 / ATCC BAA-500) protein is Phospho-N-acetylmuramoyl-pentapeptide-transferase.